A 92-amino-acid chain; its full sequence is Large ribosomal subunit protein bL28 (92 aa).

The protein belongs to the bacterial ribosomal protein bL28 family.

This Borrelia hermsii (strain HS1 / DAH) protein is Large ribosomal subunit protein bL28.